A 169-amino-acid chain; its full sequence is Putative phosphoesterase SAR0985 (169 aa).

The active-site Proton donor is histidine 34. Short sequence motifs (HXTX) lie at residues 34 to 37 (HVTI) and 115 to 118 (HFTI). The active-site Proton acceptor is histidine 115.

This sequence belongs to the 2H phosphoesterase superfamily. YjcG family.

The chain is Putative phosphoesterase SAR0985 from Staphylococcus aureus (strain MRSA252).